The sequence spans 291 residues: Bifunctional protein FolD (291 aa).

NADP(+) is bound by residues 166 to 168 (GAS) and I232.

This sequence belongs to the tetrahydrofolate dehydrogenase/cyclohydrolase family. Homodimer.

It carries out the reaction (6R)-5,10-methylene-5,6,7,8-tetrahydrofolate + NADP(+) = (6R)-5,10-methenyltetrahydrofolate + NADPH. The catalysed reaction is (6R)-5,10-methenyltetrahydrofolate + H2O = (6R)-10-formyltetrahydrofolate + H(+). It functions in the pathway one-carbon metabolism; tetrahydrofolate interconversion. In terms of biological role, catalyzes the oxidation of 5,10-methylenetetrahydrofolate to 5,10-methenyltetrahydrofolate and then the hydrolysis of 5,10-methenyltetrahydrofolate to 10-formyltetrahydrofolate. This chain is Bifunctional protein FolD, found in Photorhabdus laumondii subsp. laumondii (strain DSM 15139 / CIP 105565 / TT01) (Photorhabdus luminescens subsp. laumondii).